The primary structure comprises 147 residues: uncharacterized protein (147 aa).

The next 2 membrane-spanning stretches (helical) occupy residues 21 to 41 (LMLW…IVFV) and 67 to 87 (ALFG…SIPL).

Its subcellular location is the cell membrane. This is an uncharacterized protein from Ureaplasma parvum serovar 3 (strain ATCC 700970).